The primary structure comprises 141 residues: Translation initiation factor 2 subunit beta (141 aa).

The protein belongs to the eIF-2-beta/eIF-5 family. In terms of assembly, heterotrimer composed of an alpha, a beta and a gamma chain.

EIF-2 functions in the early steps of protein synthesis by forming a ternary complex with GTP and initiator tRNA. The protein is Translation initiation factor 2 subunit beta of Thermofilum pendens (strain DSM 2475 / Hrk 5).